Reading from the N-terminus, the 395-residue chain is Zinc finger protein HD1 (395 aa).

The B box-type 1; atypical zinc finger occupies proline 30–histidine 72. Zn(2+)-binding residues include cysteine 35, cysteine 38, cysteine 58, histidine 63, cysteine 78, cysteine 81, cysteine 101, and histidine 106. The segment at glutamate 73–proline 117 adopts a B box-type 2; atypical zinc-finger fold. 2 disordered regions span residues serine 147–glycine 176 and glycine 208–glutamate 228. A compositionally biased stretch (low complexity) spans asparagine 152 to asparagine 175. The region spanning arginine 326–arginine 368 is the CCT domain.

It belongs to the CONSTANS family. Interacts with HAL3 in the dark. In terms of processing, phosphorylated by OSK4 in the presence of HDR1.

Its subcellular location is the nucleus. In terms of biological role, probable transcription factor involved in the regulation of flower development. Required for the promotion of flowering under short day (SD) conditions and the suppression of flowering under long day (LD) conditions. Positively regulates the floral activator HEADING DATE 3a (HD3A) under SD and negatively under LD conditions. The chain is Zinc finger protein HD1 from Oryza sativa subsp. japonica (Rice).